Consider the following 270-residue polypeptide: A-type potassium channel modulatory protein KCNIP2 (270 aa).

A compositionally biased stretch (basic and acidic residues) spans 1-17 (MRGQGRKESLSDSRDLD). The segment at 1 to 32 (MRGQGRKESLSDSRDLDGSYDQLTGHPPGPTK) is disordered. Position 9 is a phosphoserine (Ser-9). S-palmitoyl cysteine attachment occurs at residues Cys-45 and Cys-46. One can recognise an EF-hand 1; degenerate domain in the interval 81 to 137 (FELSTVCHRPEGLEQLQEQTKFTRKELQVLYRGFKNECPSGIVNEENFKQIYSQFFP). EF-hand domains are found at residues 140 to 175 (DSST…ILRG), 176 to 211 (TVDD…IYDM), and 224 to 259 (APRE…DENI). Ca(2+) contacts are provided by Asp-153, Asn-155, Asp-157, Ser-159, Asp-164, Asp-189, Asn-191, Asp-193, Cys-195, Glu-200, Asp-237, Asn-239, Asp-241, and Glu-248. The interaction with KCND2 stretch occupies residues 257–270 (ENIMRSMQLFDNVI).

The protein belongs to the recoverin family. As to quaternary structure, component of heteromultimeric potassium channels. Identified in potassium channel complexes containing KCND1, KCND2, KCND3, KCNIP1, KCNIP2, KCNIP3, KCNIP4, DPP6 and DPP10. The KCND2-KCNIP2 channel complex contains four KCND2 and four KCNIP2 subunits. Interacts with KCND2. Probably part of a complex consisting of KCNIP1, KCNIP2 isoform 3 and KCND2. At least isoform 2 and isoform 3 can self-associate to form homodimers and homotetramers. Isoform 3 interacts with KCNIP1 in a calcium-dependent manner. Interacts with KCND3; each KCNIP2 monomer interacts with two adjacent KCND3 subunits, through both the N-terminal inactivation ball of a KCND3 subunit and a C-terminal helix from the adjacent KCND3 subunit, clamping them together; this interaction modulates the channel gating kinetics. Post-translationally, palmitoylated. Palmitoylation enhances association with the plasma membrane. Expressed in brain. Colocalizes with KCND2 in excitatory neurons including cortical and hippocampal CA1 pyramidal cells. Isoform 3 is expressed in heart and in umbilical vein endothelial cells. Not expressed in fetal heart.

It localises to the cell membrane. In terms of biological role, regulatory subunit of Kv4/D (Shal)-type voltage-gated rapidly inactivating A-type potassium channels. Modulates channel density, inactivation kinetics and rate of recovery from inactivation in a calcium-dependent and isoform-specific manner. Involved in KCND2 and KCND3 trafficking to the cell surface. May be required for the expression of I(To) currents in the heart. The sequence is that of A-type potassium channel modulatory protein KCNIP2 from Homo sapiens (Human).